The sequence spans 364 residues: Geissoschizine synthase (364 aa).

Residues 24 to 343 (GILHPIKFSR…DYLSTAMERI (320 aa)) form the Enoyl reductase (ER) domain. A Zn(2+)-binding site is contributed by Cys-51. Asn-52 lines the NADP(+) pocket. The Zn(2+) site is built by His-73, Glu-74, Cys-104, Cys-107, Cys-110, Cys-118, and Cys-168. NADP(+) contacts are provided by Leu-194, Gly-196, Leu-197, Ser-216, Thr-217, Ser-218, Lys-221, Arg-261, Val-280, Ala-282, Ser-304, Thr-306, and Arg-351.

This sequence belongs to the zinc-containing alcohol dehydrogenase family. Class-III subfamily. Homodimer. It depends on Zn(2+) as a cofactor.

It carries out the reaction (19E)-geissoschizine + NADP(+) = 4,21-dehydrogeissoschizine + NADPH. It catalyses the reaction (19E)-geissoschizine + NADPH + H(+) = (16R,19E)-isositsirikine + NADP(+). The catalysed reaction is (19E)-geissoschizine + NADPH + H(+) = (16R,19Z)-isositsirikine + NADP(+). Its pathway is alkaloid biosynthesis. In terms of biological role, an alcohol dehydrogenase involved in the biosynthesis of seco-iridoid and derivatives monoterpenoid indole alkaloids natural products. Catalyzes the production of geissoschizine and its conversion to (16R)-E-isositsirikine and (16R)-Z-isositsirikine. This Alstonia scholaris (Dogbane) protein is Geissoschizine synthase.